We begin with the raw amino-acid sequence, 629 residues long: MFYPDPFDVIIIGGGHAGTEAAMAAARMGQQTLLLTHNIDTLGQMSCNPAIGGIGKGHLVKEVDALGGLMAKAIDQAGIQFRILNASKGPAVRATRAQADRVRYRQAVRTALENQPNLMIFQQAVEDLIVENDRVVGAVTQMGLKFRAKAVVLTVGTFLDGKIHIGLDNYSGGRAGDPPSIPLSRRLRELPLRVGRLKTGTPPRIDARTIDFSVLAQQHGDNPMPVFSFMGNASLHPQQVPCYITHTNEKTHDVIRSNLDRSPMYAGVIEGVGPRYCPSIEDKVMRFADRNQHQIFLEPEGLTSNEIYPNGISTSLPFDVQMQIVRSMQGMENAKIVRPGYAIEYDFFDPRDLKPTLESKFIQGLFFAGQINGTTGYEEAAAQGLLAGLNAARLSADKEGWAPARSQAYLGVLVDDLCTLGTKEPYRMFTSRAEYRLMLREDNADLRLTEIGRELGLVDDERWARFNEKLENIERERQRLKSTWVTPSAEAAAEVNAHLTAPLSREASGEDLLRRPEMTYEKLTTLTPFAPALTDEQAAEQVEIQVKYEGYIARQQDEIEKQLRNENTLLPATLDYRQISGLSNEVIAKLNDHKPASIGQASRISGVTPAAISILLVWLKKQGMLRRSA.

Residues 13-18 (GGGHAG), Val125, and Ser180 each bind FAD. 273–287 (GPRYCPSIEDKVMRF) contacts NAD(+). Gln370 is a binding site for FAD.

It belongs to the MnmG family. In terms of assembly, homodimer. Heterotetramer of two MnmE and two MnmG subunits. It depends on FAD as a cofactor.

The protein localises to the cytoplasm. Functionally, NAD-binding protein involved in the addition of a carboxymethylaminomethyl (cmnm) group at the wobble position (U34) of certain tRNAs, forming tRNA-cmnm(5)s(2)U34. The sequence is that of tRNA uridine 5-carboxymethylaminomethyl modification enzyme MnmG from Shigella flexneri serotype 5b (strain 8401).